A 181-amino-acid chain; its full sequence is Lipoprotein signal peptidase (181 aa).

Transmembrane regions (helical) follow at residues Leu-25–Ile-45, Leu-86–Val-106, and Lys-107–Asp-127. Catalysis depends on residues Asp-138 and Asp-153. The chain crosses the membrane as a helical span at residues Phe-149–Ile-169.

This sequence belongs to the peptidase A8 family.

It localises to the cell membrane. The catalysed reaction is Release of signal peptides from bacterial membrane prolipoproteins. Hydrolyzes -Xaa-Yaa-Zaa-|-(S,diacylglyceryl)Cys-, in which Xaa is hydrophobic (preferably Leu), and Yaa (Ala or Ser) and Zaa (Gly or Ala) have small, neutral side chains.. Its pathway is protein modification; lipoprotein biosynthesis (signal peptide cleavage). Functionally, this protein specifically catalyzes the removal of signal peptides from prolipoproteins. This is Lipoprotein signal peptidase from Mycoplasma genitalium (strain ATCC 33530 / DSM 19775 / NCTC 10195 / G37) (Mycoplasmoides genitalium).